A 164-amino-acid polypeptide reads, in one-letter code: UPF0114 protein YqhA (164 aa).

A run of 3 helical transmembrane segments spans residues 15 to 35 (LLAP…LKFF), 53 to 73 (LILV…LVMV), and 136 to 156 (LMWY…MGYL).

Belongs to the UPF0114 family.

It localises to the cell membrane. This chain is UPF0114 protein YqhA, found in Salmonella dublin (strain CT_02021853).